Here is a 257-residue protein sequence, read N- to C-terminus: Imidazole glycerol phosphate synthase subunit HisF (257 aa).

Residues Asp11 and Asp130 contribute to the active site.

The protein belongs to the HisA/HisF family. Heterodimer of HisH and HisF.

It is found in the cytoplasm. The enzyme catalyses 5-[(5-phospho-1-deoxy-D-ribulos-1-ylimino)methylamino]-1-(5-phospho-beta-D-ribosyl)imidazole-4-carboxamide + L-glutamine = D-erythro-1-(imidazol-4-yl)glycerol 3-phosphate + 5-amino-1-(5-phospho-beta-D-ribosyl)imidazole-4-carboxamide + L-glutamate + H(+). Its pathway is amino-acid biosynthesis; L-histidine biosynthesis; L-histidine from 5-phospho-alpha-D-ribose 1-diphosphate: step 5/9. Functionally, IGPS catalyzes the conversion of PRFAR and glutamine to IGP, AICAR and glutamate. The HisF subunit catalyzes the cyclization activity that produces IGP and AICAR from PRFAR using the ammonia provided by the HisH subunit. In Tolumonas auensis (strain DSM 9187 / NBRC 110442 / TA 4), this protein is Imidazole glycerol phosphate synthase subunit HisF.